Consider the following 157-residue polypeptide: SsrA-binding protein (157 aa).

The protein belongs to the SmpB family.

It is found in the cytoplasm. Required for rescue of stalled ribosomes mediated by trans-translation. Binds to transfer-messenger RNA (tmRNA), required for stable association of tmRNA with ribosomes. tmRNA and SmpB together mimic tRNA shape, replacing the anticodon stem-loop with SmpB. tmRNA is encoded by the ssrA gene; the 2 termini fold to resemble tRNA(Ala) and it encodes a 'tag peptide', a short internal open reading frame. During trans-translation Ala-aminoacylated tmRNA acts like a tRNA, entering the A-site of stalled ribosomes, displacing the stalled mRNA. The ribosome then switches to translate the ORF on the tmRNA; the nascent peptide is terminated with the 'tag peptide' encoded by the tmRNA and targeted for degradation. The ribosome is freed to recommence translation, which seems to be the essential function of trans-translation. This chain is SsrA-binding protein, found in Chlorobium chlorochromatii (strain CaD3).